The primary structure comprises 180 residues: Small ribosomal subunit protein uS5 (180 aa).

One can recognise an S5 DRBM domain in the interval 24–87; that stretch reads MIEKLVAVNR…EQARKNLATV (64 aa).

Belongs to the universal ribosomal protein uS5 family. In terms of assembly, part of the 30S ribosomal subunit. Contacts proteins S4 and S8.

Its function is as follows. With S4 and S12 plays an important role in translational accuracy. Functionally, located at the back of the 30S subunit body where it stabilizes the conformation of the head with respect to the body. This is Small ribosomal subunit protein uS5 from Xanthomonas axonopodis pv. citri (strain 306).